A 418-amino-acid polypeptide reads, in one-letter code: Voltage-gated ClC-type chloride channel ClcB (418 aa).

10 consecutive transmembrane segments (helical) span residues 5–25, 54–74, 146–166, 168–188, 222–242, 258–278, 291–311, 316–336, 352–372, and 380–400; these read LLIA…FRHA, LLTP…WQKF, LWIA…PLAG, LFIA…PVII, ALII…LTLM, WQLA…PAVW, APPL…AVLA, GAPG…GMLY, LLLG…APIM, and MTGE…ASVI.

The protein belongs to the chloride channel (TC 2.A.49) family. ClcB subfamily.

The protein localises to the cell inner membrane. Its function is as follows. Probably acts as an electrical shunt for an outwardly-directed proton pump that is linked to amino acid decarboxylation, as part of the extreme acid resistance (XAR) response. The polypeptide is Voltage-gated ClC-type chloride channel ClcB (Escherichia coli (strain SMS-3-5 / SECEC)).